Here is a 451-residue protein sequence, read N- to C-terminus: Tubulin alpha chain (451 aa).

Gln11 serves as a coordination point for GTP. Residue Lys40 is modified to N6-acetyllysine. Glu71, Gly144, Thr145, Thr179, Asn206, and Asn228 together coordinate GTP. Glu71 is a Mg(2+) binding site. Residue Glu254 is part of the active site. The interval 432 to 451 (YEEVGAESAEGDDEDEGEDY) is disordered.

This sequence belongs to the tubulin family. In terms of assembly, dimer of alpha and beta chains. A typical microtubule is a hollow water-filled tube with an outer diameter of 25 nm and an inner diameter of 15 nM. Alpha-beta heterodimers associate head-to-tail to form protofilaments running lengthwise along the microtubule wall with the beta-tubulin subunit facing the microtubule plus end conferring a structural polarity. Microtubules usually have 13 protofilaments but different protofilament numbers can be found in some organisms and specialized cells. Requires Mg(2+) as cofactor. Post-translationally, undergoes a tyrosination/detyrosination cycle, the cyclic removal and re-addition of a C-terminal tyrosine residue by the enzymes tubulin tyrosine carboxypeptidase (TTCP) and tubulin tyrosine ligase (TTL), respectively. In terms of processing, acetylation of alpha chains at Lys-40 stabilizes microtubules and affects affinity and processivity of microtubule motors. This modification has a role in multiple cellular functions, ranging from cell motility, cell cycle progression or cell differentiation to intracellular trafficking and signaling.

Its subcellular location is the cytoplasm. It is found in the cytoskeleton. The catalysed reaction is GTP + H2O = GDP + phosphate + H(+). Functionally, tubulin is the major constituent of microtubules, a cylinder consisting of laterally associated linear protofilaments composed of alpha- and beta-tubulin heterodimers. Microtubules grow by the addition of GTP-tubulin dimers to the microtubule end, where a stabilizing cap forms. Below the cap, tubulin dimers are in GDP-bound state, owing to GTPase activity of alpha-tubulin. This Daucus carota (Wild carrot) protein is Tubulin alpha chain (TBA).